The chain runs to 304 residues: Hairy/enhancer-of-split related with YRPW motif protein 1 (304 aa).

Residues 1–52 form a disordered region; it reads MKRAHPDYSSSDSELDETVEVEKESADENGNLSSALGSMSPTTSSQILARKR. Residues 28–47 are compositionally biased toward polar residues; sequence ENGNLSSALGSMSPTTSSQI. A transcriptional repression and interaction with NCOR1 and SIN3A region spans residues 48–117; it reads LARKRRRGII…GGKGYFDAHA (70 aa). Residues 49–104 form the bHLH domain; that stretch reads ARKRRRGIIEKRRRDRINNSLSELRRLVPSAFEKQGSAKLEKAEILQMTVDHLKML. The Orange domain occupies 122-158; sequence YRSLGFRECLAEVARYLSIIEGLDASDPLRVRLVSHL. The segment at 191–234 is disordered; it reads AHPLLLPQSGHGNTGTSASPTDPHHQGRLAAAHPEAPALRAPPS. Positions 200 to 210 are enriched in polar residues; sequence GHGNTGTSASP. Residues 218–234 show a composition bias toward low complexity; it reads RLAAAHPEAPALRAPPS.

The protein belongs to the HEY family. As to quaternary structure, self-associates. Interacts with HES1 and HEYL. Interacts with HDAC1, NCOR1 and SIN3A. Interacts with GATA4 and GATA6. Interacts with CCDC89/BOIP.

The protein resides in the nucleus. Transcriptional repressor which binds preferentially to the canonical E box sequence 5'-CACGTG-3'. Downstream effector of Notch signaling required for cardiovascular development. Specifically required for the Notch-induced endocardial epithelial to mesenchymal transition, which is itself criticial for cardiac valve and septum development. May be required in conjunction with HEY2 to specify arterial cell fate or identity. Promotes maintenance of neuronal precursor cells and glial versus neuronal fate specification. Represses transcription by the cardiac transcriptional activators GATA4 and GATA6 and by the neuronal bHLH factors ASCL1/MASH1 and NEUROD4/MATH3. The protein is Hairy/enhancer-of-split related with YRPW motif protein 1 (HEY1) of Canis lupus familiaris (Dog).